The sequence spans 794 residues: Copper amine oxidase-like protein cao2 (794 aa).

Residues 307-318 (AYDLGEYGVGYR) and 391-396 (AANYEY) contribute to the substrate site. The active-site Proton acceptor is aspartate 309. The Schiff-base intermediate with substrate; via topaquinone role is filled by tyrosine 394. The residue at position 394 (tyrosine 394) is a 2',4',5'-topaquinone. The Cu cation site is built by histidine 445 and histidine 447. The interval 563–584 (GDYAPQASDDTPKGLSKWISDD) is disordered. Residues aspartate 593 and isoleucine 594 each contribute to the Mn(2+) site. Histidine 604 lines the Cu cation pocket. The tract at residues 634–748 (ALDTSSSVNS…NGGHHHHHHH (115 aa)) is disordered. Low complexity predominate over residues 637–649 (TSSSVNSTSEATS). A compositionally biased stretch (basic and acidic residues) spans 652–714 (THHENLRDTS…DAAQKHEGRS (63 aa)). Positions 716–727 (TLAQPGQQNANQ) are enriched in polar residues.

The protein belongs to the copper/topaquinone oxidase family. Homodimer. The cofactor is Cu cation. Zn(2+) serves as cofactor. L-topaquinone is required as a cofactor. Requires Mn(2+) as cofactor. Topaquinone (TPQ) is generated by copper-dependent autoxidation of a specific tyrosyl residue.

Its subcellular location is the cytoplasm. The catalysed reaction is a primary methyl amine + O2 + H2O = an aldehyde + H2O2 + NH4(+). In terms of biological role, copper amine oxidase-like protein that does not show any copper amine oxidase activity. May be the appropriate amine substrate for cao2 has not been identified yet. The protein is Copper amine oxidase-like protein cao2 (cao2) of Schizosaccharomyces pombe (strain 972 / ATCC 24843) (Fission yeast).